Reading from the N-terminus, the 403-residue chain is Probable protein phosphatase 2C 8 (403 aa).

Positions 42-80 are disordered; the sequence is LGRTASAVAEDDAAKRVRPASDSSSDSSESAKVAPEPTA. Over residues 62–71 the composition is skewed to low complexity; that stretch reads SDSSSDSSES. A PPM-type phosphatase domain is found at 90–388; it reads SHGAVSVIGR…DNISVVVVEL (299 aa). Residues aspartate 144, glycine 145, aspartate 325, and aspartate 379 each contribute to the Mn(2+) site.

This sequence belongs to the PP2C family. The cofactor is Mg(2+). Requires Mn(2+) as cofactor.

It carries out the reaction O-phospho-L-seryl-[protein] + H2O = L-seryl-[protein] + phosphate. The enzyme catalyses O-phospho-L-threonyl-[protein] + H2O = L-threonyl-[protein] + phosphate. This Oryza sativa subsp. japonica (Rice) protein is Probable protein phosphatase 2C 8.